Consider the following 707-residue polypeptide: Matrix metalloproteinase-9 (707 aa).

The first 19 residues, 1–19 (MSPRQPLVLALLVLGCCSA), serve as a signal peptide directing secretion. A propeptide spans 20-106 (APRRRQPTLV…PRCGVPDVGK (87 aa)) (activation peptide). The N-linked (GlcNAc...) asparagine glycan is linked to asparagine 88. The Cysteine switch motif lies at 97-104 (PRCGVPDV). Cysteine 99 lines the Zn(2+) pocket. Asparagine 120 and asparagine 127 each carry an N-linked (GlcNAc...) asparagine glycan. Residues aspartate 131 and aspartate 165 each contribute to the Ca(2+) site. Residues histidine 175 and aspartate 177 each coordinate Zn(2+). Residues aspartate 182, glycine 183, aspartate 185, and leucine 187 each coordinate Ca(2+). Histidine 190 contacts Zn(2+). Ca(2+) contacts are provided by glycine 197, glutamine 199, and aspartate 201. Histidine 203 serves as a coordination point for Zn(2+). 3 residues coordinate Ca(2+): aspartate 205, aspartate 206, and glutamate 208. Fibronectin type-II domains are found at residues 225–273 (ADGA…FCPS), 283–331 (ADGK…FCPT), and 342–390 (SAGE…FCPD). Disulfide bonds link cysteine 230-cysteine 256, cysteine 244-cysteine 271, cysteine 288-cysteine 314, cysteine 302-cysteine 329, cysteine 347-cysteine 373, and cysteine 361-cysteine 388. Histidine 401 lines the Zn(2+) pocket. Residue glutamate 402 is part of the active site. Histidine 405 and histidine 411 together coordinate Zn(2+). The disordered stretch occupies residues 437–508 (RGIQHLYGPN…ASPSAAPTAS (72 aa)). A compositionally biased stretch (pro residues) spans 446–467 (NPNPQPPATTTPEPQPTAPPTA). Positions 481–493 (PTTSPTGAPSAGP) are enriched in low complexity. The cysteines at positions 516 and 704 are disulfide-linked. Hemopexin repeat units lie at residues 518 to 563 (VNVF…WPAL), 564 to 608 (PAKL…GLGP), 610 to 657 (VPHV…FPGV), and 658 to 704 (PLNT…ILHC).

It belongs to the peptidase M10A family. In terms of assembly, exists as monomer or homodimer; disulfide-linked. Also exists as heterodimer with LCN2. Macrophages and transformed cell lines produce only the monomeric form. Interacts with ECM1. Zn(2+) is required as a cofactor. The cofactor is Ca(2+). N- and O-glycosylated. Osteoclasts.

Its subcellular location is the secreted. The protein resides in the extracellular space. It is found in the extracellular matrix. The enzyme catalyses Cleavage of gelatin types I and V and collagen types IV and V.. Matrix metalloproteinase that plays an essential role in local proteolysis of the extracellular matrix and in leukocyte migration. Could play a role in bone osteoclastic resorption. Cleaves KiSS1 at a Gly-|-Leu bond. Cleaves NINJ1 to generate the Secreted ninjurin-1 form. Cleaves type IV and type V collagen into large C-terminal three quarter fragments and shorter N-terminal one quarter fragments. Degrades fibronectin but not laminin or Pz-peptide. The polypeptide is Matrix metalloproteinase-9 (Oryctolagus cuniculus (Rabbit)).